The following is a 276-amino-acid chain: Lipoyl synthase (276 aa).

Residues cysteine 27, cysteine 32, cysteine 38, cysteine 53, cysteine 57, cysteine 60, and serine 266 each contribute to the [4Fe-4S] cluster site. One can recognise a Radical SAM core domain in the interval 39-255; the sequence is FGNKTATFMI…EEIGYEMGFK (217 aa).

Belongs to the radical SAM superfamily. Lipoyl synthase family. [4Fe-4S] cluster is required as a cofactor.

The protein resides in the cytoplasm. It carries out the reaction [[Fe-S] cluster scaffold protein carrying a second [4Fe-4S](2+) cluster] + N(6)-octanoyl-L-lysyl-[protein] + 2 oxidized [2Fe-2S]-[ferredoxin] + 2 S-adenosyl-L-methionine + 4 H(+) = [[Fe-S] cluster scaffold protein] + N(6)-[(R)-dihydrolipoyl]-L-lysyl-[protein] + 4 Fe(3+) + 2 hydrogen sulfide + 2 5'-deoxyadenosine + 2 L-methionine + 2 reduced [2Fe-2S]-[ferredoxin]. It participates in protein modification; protein lipoylation via endogenous pathway; protein N(6)-(lipoyl)lysine from octanoyl-[acyl-carrier-protein]: step 2/2. Catalyzes the radical-mediated insertion of two sulfur atoms into the C-6 and C-8 positions of the octanoyl moiety bound to the lipoyl domains of lipoate-dependent enzymes, thereby converting the octanoylated domains into lipoylated derivatives. The polypeptide is Lipoyl synthase (Aquifex aeolicus (strain VF5)).